Consider the following 509-residue polypeptide: Probable aspartic-type endopeptidase CTSD (509 aa).

The signal sequence occupies residues 1–21 (MQFLWLCLLSAVTLQFTGTLA). Positions 102 to 408 (YFSEVKVGSE…DFDKNRVGLA (307 aa)) constitute a Peptidase A1 domain. Asp120 is a catalytic residue. Asn174 is a glycosylation site (N-linked (GlcNAc...) asparagine). Residue Asp302 is part of the active site. Asn361 carries an N-linked (GlcNAc...) asparagine glycan. The tract at residues 451-489 (NKAPSGGSPGLPAESGSDSTTNGEATNGATSSPNSSSSV) is disordered. Positions 466 to 480 (GSDSTTNGEATNGAT) are enriched in polar residues. N-linked (GlcNAc...) asparagine glycosylation occurs at Asn484. Ser485 carries GPI-anchor amidated serine lipidation. Positions 486–509 (SSSVLTPTWLTLAVFFAIGSSLWS) are cleaved as a propeptide — removed in mature form.

It belongs to the peptidase A1 family.

Its subcellular location is the cell membrane. Its function is as follows. Probable GPI-anchored aspartic-type endopeptidase which contributes to virulence. This is Probable aspartic-type endopeptidase CTSD (CTSD) from Arthroderma benhamiae (strain ATCC MYA-4681 / CBS 112371) (Trichophyton mentagrophytes).